Reading from the N-terminus, the 105-residue chain is UPF0235 protein A1E_05380 (105 aa).

The protein belongs to the UPF0235 family.

The polypeptide is UPF0235 protein A1E_05380 (Rickettsia canadensis (strain McKiel)).